Here is a 299-residue protein sequence, read N- to C-terminus: Glutamate formimidoyltransferase (299 aa).

Catalysis depends on H82, which acts as the For formimidoyltransferase activity. 163–172 (GDRKIHPTAG) contacts folate.

The protein belongs to the formiminotransferase family.

Its subcellular location is the cytoplasm. The catalysed reaction is (6S)-5-formyl-5,6,7,8-tetrahydrofolate + L-glutamate = N-formyl-L-glutamate + (6S)-5,6,7,8-tetrahydrofolate + H(+). It catalyses the reaction 5-formimidoyltetrahydrofolate + L-glutamate = N-formimidoyl-L-glutamate + (6S)-5,6,7,8-tetrahydrofolate. It carries out the reaction (6S)-5-formyl-5,6,7,8-tetrahydrofolate + ATP = (6R)-5,10-methenyltetrahydrofolate + ADP + phosphate. It functions in the pathway amino-acid degradation; L-histidine degradation into L-glutamate; L-glutamate from N-formimidoyl-L-glutamate (transferase route): step 1/1. Its pathway is one-carbon metabolism; tetrahydrofolate interconversion. Its function is as follows. Catalyzes the transfer of the formyl group from N-formylglutamate to tetrahydrofolate (THF) to yield 5-formyltetrahydrofolate (5-CHO-THF) and glutamate (Glu). The triglutamate form of 5-CHO-THF (5-CHO-THF-Glu3) can also be used as substrate. It can also catalyze the transfer of the formimino group from N-formiminoglutamate to tetrahydrofolate (THF) to yield 5-formiminotetrahydrofolate (5-NH=CH-THF) and glutamate (Glu). It can replace YgfA to catalyze the irreversible ATP-dependent transformation of 5-CHO-THF to form 5,10-methenyltetrahydrofolate (5,10-CH=THF). This chain is Glutamate formimidoyltransferase, found in Streptococcus pyogenes serotype M1.